Reading from the N-terminus, the 433-residue chain is Serine/threonine-protein kinase toxin HipA (433 aa).

The residue at position 147 (Ser-147) is a Phosphoserine; by autocatalysis. ATP contacts are provided by residues 151-154, Lys-178, and 220-222; these read VQPK and ERF. The active-site Proton acceptor is Asp-306. ATP contacts are provided by residues 308-311 and 327-328; these read HGKN and YD. 2 consecutive DNA-binding regions follow at residues 380–384 and Arg-429; that span reads RIARR.

The protein belongs to the HipA Ser/Thr kinase family. In terms of assembly, monomer. Forms a HipA(2)HipB(2)-DNA complex with cognate antitoxin HipB; has higher affinity for the latter when HipB is prebound to DNA and HipA is phosphorylated. Binds DNA in the ternary complex.

It catalyses the reaction L-seryl-[protein] + ATP = O-phospho-L-seryl-[protein] + ADP + H(+). The enzyme catalyses L-threonyl-[protein] + ATP = O-phospho-L-threonyl-[protein] + ADP + H(+). Functionally, toxic component of a type II toxin-antitoxin (TA) system; overexpression in wild-type temporarily inhibits cell growth, overexpression in a hipAB deletion leads to acute growth inhibition. The toxic effect of HipA is neutralized by its cognate antitoxin HipB. In the ternary phosphoserine-HipA-HipB-DNA complex the DNA is bent about 125 degrees; all HipA in the crystallized ternary complex is phosphorylated. In E.coli phosphorylation of HipA is thought to release HipB from the HipA-HipB-DNA complex, suggesting the complex functions differently in the 2 bacteria. Phosphorylates Glu-tRNA-ligase (GltX, on 'Ser-239') in vivo, with HipB probably acts as a corepressor for transcription of the hipBA promoter. The protein is Serine/threonine-protein kinase toxin HipA of Shewanella oneidensis (strain ATCC 700550 / JCM 31522 / CIP 106686 / LMG 19005 / NCIMB 14063 / MR-1).